The sequence spans 208 residues: Dephospho-CoA kinase (208 aa).

The region spanning 5–201 is the DPCK domain; that stretch reads IVALTGGIGS…QRYLALAASA (197 aa). 13–18 contacts ATP; sequence GSGKST.

Belongs to the CoaE family.

It is found in the cytoplasm. The catalysed reaction is 3'-dephospho-CoA + ATP = ADP + CoA + H(+). Its pathway is cofactor biosynthesis; coenzyme A biosynthesis; CoA from (R)-pantothenate: step 5/5. Its function is as follows. Catalyzes the phosphorylation of the 3'-hydroxyl group of dephosphocoenzyme A to form coenzyme A. The chain is Dephospho-CoA kinase from Sodalis glossinidius (strain morsitans).